The primary structure comprises 212 residues: Large ribosomal subunit protein uL3 (212 aa).

Over residues 140–155 the composition is skewed to polar residues; that stretch reads SVSHRAIGSTGQNQSP. The interval 140–166 is disordered; that stretch reads SVSHRAIGSTGQNQSPGKVFKGKKMPG. Glutamine 153 is modified (N5-methylglutamine).

The protein belongs to the universal ribosomal protein uL3 family. As to quaternary structure, part of the 50S ribosomal subunit. Forms a cluster with proteins L14 and L19. Post-translationally, methylated by PrmB.

In terms of biological role, one of the primary rRNA binding proteins, it binds directly near the 3'-end of the 23S rRNA, where it nucleates assembly of the 50S subunit. The chain is Large ribosomal subunit protein uL3 from Psychrobacter cryohalolentis (strain ATCC BAA-1226 / DSM 17306 / VKM B-2378 / K5).